The following is a 632-amino-acid chain: CREB-regulated transcription coactivator 3 (632 aa).

S66 bears the Phosphoserine mark. The span at 105–115 (NRLHSSHHRPV) shows a compositional bias: basic residues. Residues 105 to 156 (NRLHSSHHRPVEKHGRQCDSSPYGSVYLSPPPDNNWRRTNSDSALHTSASSS) form a disordered region. Phosphoserine is present on S133. S145 carries the post-translational modification Phosphoserine; by SIK2. Over residues 145 to 156 (SDSALHTSASSS) the composition is skewed to low complexity. T151 bears the Phosphothreonine mark. S293 carries the phosphoserine modification. Residues 310–338 (GIQNTCSNPSIQATMNNNVNNHTPPGRNN) show a composition bias toward polar residues. The interval 310 to 455 (GIQNTCSNPS…ESQNFQPPSP (146 aa)) is disordered. A compositionally biased stretch (low complexity) spans 339–360 (PTLHPSLRLSSLSNPSLPTSAL). Phosphoserine is present on residues S372 and S391. Residues 372 to 405 (SPLTLTPGSESNRSISNQFSPTSPMDMLPNSQGV) show a composition bias toward polar residues. Residues 413–424 (SLPPLEPPPPYP) are compositionally biased toward pro residues. The span at 425–440 (LYTDQPQPQLHHTQQQ) shows a compositional bias: low complexity. At S556 the chain carries Phosphoserine.

Belongs to the TORC family. As to quaternary structure, binding, as a tetramer, through its N-terminal region, with the bZIP domain of creb1 enhances recruitment of taf4 to the promoter. 'Arg-300' in the bZIP domain of creb1 is essential for this interaction.

It localises to the nucleus. It is found in the cytoplasm. In terms of biological role, transcriptional coactivator for creb1 which activates transcription through both consensus and variant cAMP response element (CRE) sites. Acts as a coactivator, in the SIK/TORC signaling pathway, being active when dephosphorylated and acts independently of creb1 'Ser-119' phosphorylation. Enhances the interaction of creb1 with taf4. Regulates the expression of specific CREB-activated genes such as the steroidogenic gene, StAR. Potent coactivator of ppargc1a and inducer of mitochondrial biogenesis in muscle cells. This Xenopus laevis (African clawed frog) protein is CREB-regulated transcription coactivator 3 (crtc3).